The following is a 314-amino-acid chain: UPF0761 membrane protein VP0125 (314 aa).

A run of 6 helical transmembrane segments spans residues 41–61 (YLAY…LSIL), 104–124 (MSAV…SNID), 139–159 (LVFS…LVGA), 185–205 (FLRW…YILV), 217–237 (VGAA…ALYI), and 249–269 (ALAA…IVLL). The disordered stretch occupies residues 295–314 (ESQLANEGSESSDSANSTSQ).

The protein belongs to the UPF0761 family.

It is found in the cell inner membrane. This chain is UPF0761 membrane protein VP0125, found in Vibrio parahaemolyticus serotype O3:K6 (strain RIMD 2210633).